Here is a 448-residue protein sequence, read N- to C-terminus: Thymidine phosphorylase (448 aa).

Belongs to the thymidine/pyrimidine-nucleoside phosphorylase family. As to quaternary structure, homodimer.

It catalyses the reaction thymidine + phosphate = 2-deoxy-alpha-D-ribose 1-phosphate + thymine. It participates in pyrimidine metabolism; dTMP biosynthesis via salvage pathway; dTMP from thymine: step 1/2. The enzymes which catalyze the reversible phosphorolysis of pyrimidine nucleosides are involved in the degradation of these compounds and in their utilization as carbon and energy sources, or in the rescue of pyrimidine bases for nucleotide synthesis. The chain is Thymidine phosphorylase from Vibrio cholerae serotype O1 (strain ATCC 39315 / El Tor Inaba N16961).